Here is a 489-residue protein sequence, read N- to C-terminus: GTPase Der (489 aa).

EngA-type G domains lie at P3–V166 and I201–T374. Residues G9 to S16, D56 to I60, N118 to D121, G207 to S214, D254 to V258, and N319 to D322 each bind GTP. The KH-like domain occupies K375–T459.

It belongs to the TRAFAC class TrmE-Era-EngA-EngB-Septin-like GTPase superfamily. EngA (Der) GTPase family. As to quaternary structure, associates with the 50S ribosomal subunit.

GTPase that plays an essential role in the late steps of ribosome biogenesis. This is GTPase Der from Psychromonas ingrahamii (strain DSM 17664 / CCUG 51855 / 37).